A 238-amino-acid polypeptide reads, in one-letter code: Probable septum site-determining protein MinC (238 aa).

The protein belongs to the MinC family. In terms of assembly, interacts with MinD and FtsZ.

Its function is as follows. Cell division inhibitor that blocks the formation of polar Z ring septums. Rapidly oscillates between the poles of the cell to destabilize FtsZ filaments that have formed before they mature into polar Z rings. Prevents FtsZ polymerization. The chain is Probable septum site-determining protein MinC from Aeromonas salmonicida (strain A449).